A 181-amino-acid chain; its full sequence is Trypsin inhibitor B (181 aa).

2 disulfide bridges follow: Cys39–Cys86 and Cys136–Cys145.

The protein belongs to the protease inhibitor I3 (leguminous Kunitz-type inhibitor) family.

Inhibition of trypsin. The sequence is that of Trypsin inhibitor B from Glycine max (Soybean).